The chain runs to 444 residues: 23S rRNA (uracil(1939)-C(5))-methyltransferase RlmD (444 aa).

The 63-residue stretch at 5–67 (RSRIDRTPFQ…RHFDEARTVE (63 aa)) folds into the TRAM domain. [4Fe-4S] cluster contacts are provided by Cys80, Cys86, Cys89, and Cys168. S-adenosyl-L-methionine contacts are provided by Gln276, Phe305, Asn310, Glu326, Asp353, and Asp374. The active-site Nucleophile is Cys400.

Belongs to the class I-like SAM-binding methyltransferase superfamily. RNA M5U methyltransferase family. RlmD subfamily.

The catalysed reaction is uridine(1939) in 23S rRNA + S-adenosyl-L-methionine = 5-methyluridine(1939) in 23S rRNA + S-adenosyl-L-homocysteine + H(+). Catalyzes the formation of 5-methyl-uridine at position 1939 (m5U1939) in 23S rRNA. The chain is 23S rRNA (uracil(1939)-C(5))-methyltransferase RlmD from Stenotrophomonas maltophilia (strain K279a).